The primary structure comprises 217 residues: Zinc finger CCHC-type and RNA-binding motif-containing protein 1 (217 aa).

One can recognise an RRM domain in the interval 10–88 (STVYVSNLPF…RVIKASIAID (79 aa)). The CCHC-type zinc-finger motif lies at 105 to 122 (SKCYECGESGHLSYACPK). The interval 120-217 (CPKNMLGERE…YFSDEEELSD (98 aa)) is disordered. The segment covering 145-163 (PEEEIEEVEESEDEGEDPA) has biased composition (acidic residues). Residues Ser155, Ser210, and Ser216 each carry the phosphoserine modification.

In terms of assembly, component of the U11/U12 snRNPs that are part of the U12-type spliceosome.

It is found in the nucleus. It localises to the nucleoplasm. In Homo sapiens (Human), this protein is Zinc finger CCHC-type and RNA-binding motif-containing protein 1 (ZCRB1).